We begin with the raw amino-acid sequence, 546 residues long: Cryptochrome DASH, chloroplastic/mitochondrial (546 aa).

The Photolyase/cryptochrome alpha/beta domain occupies 4-151; it reads TRVVIWFRND…TMERHWGSTL (148 aa). The interval 497–546 is disordered; that stretch reads PRRDFTEMGSPPGPRRGGGGGGRGRGRPGGSTPNRGTKARVASVYDTVYG. Residues 511–525 show a composition bias toward gly residues; it reads RRGGGGGGRGRGRPG.

It belongs to the DNA photolyase class-1 family. It depends on FAD as a cofactor. The cofactor is (6R)-5,10-methylene-5,6,7,8-tetrahydrofolate.

The protein resides in the plastid. It localises to the chloroplast. It is found in the mitochondrion. May have a photoreceptor function. Binds ss- and ds-DNA in a sequence non-specific manner, lacks photolyase activity. The polypeptide is Cryptochrome DASH, chloroplastic/mitochondrial (Ostreococcus tauri).